The primary structure comprises 156 residues: Ribosome-binding factor A (156 aa).

Residues 125-138 (RVREGAKHAGDPDP) show a composition bias toward basic and acidic residues. Residues 125–156 (RVREGAKHAGDPDPYRVGGAEDTDGDTDGDER) are disordered. The span at 145 to 156 (EDTDGDTDGDER) shows a compositional bias: acidic residues.

It belongs to the RbfA family. As to quaternary structure, monomer. Binds 30S ribosomal subunits, but not 50S ribosomal subunits or 70S ribosomes.

It is found in the cytoplasm. Its function is as follows. One of several proteins that assist in the late maturation steps of the functional core of the 30S ribosomal subunit. Associates with free 30S ribosomal subunits (but not with 30S subunits that are part of 70S ribosomes or polysomes). Required for efficient processing of 16S rRNA. May interact with the 5'-terminal helix region of 16S rRNA. The polypeptide is Ribosome-binding factor A (Mycolicibacterium smegmatis (strain ATCC 700084 / mc(2)155) (Mycobacterium smegmatis)).